A 572-amino-acid chain; its full sequence is Mitochondrial distribution and morphology protein 34 (572 aa).

Residues 1–195 (MAFNFNWSPL…LPAIIHRLSL (195 aa)) enclose the SMP-LTD domain. 4 disordered regions span residues 208 to 236 (LQTQ…VDAL), 296 to 405 (PSDQ…CSAP), 455 to 518 (RDTA…PFIN), and 551 to 572 (NACG…AYGH). Positions 296–347 (PSDQTDASGGVTSPFSPVLSRTQSQVGSMSSFPDSASMVSNQSRSSTPSHTF) are enriched in polar residues. Residues 358–370 (RHSKAHARKRKKR) are compositionally biased toward basic residues. Over residues 371 to 381 (VVDLRRPKTTD) the composition is skewed to basic and acidic residues. Polar residues-rich tracts occupy residues 387 to 401 (SDES…TPSI) and 498 to 511 (ATGS…QLPS).

Belongs to the MDM34 family. In terms of assembly, component of the ER-mitochondria encounter structure (ERMES) or MDM complex, composed of mmm1, mdm10, mdm12 and mdm34.

It is found in the mitochondrion outer membrane. In terms of biological role, component of the ERMES/MDM complex, which serves as a molecular tether to connect the endoplasmic reticulum (ER) and mitochondria. Components of this complex are involved in the control of mitochondrial shape and protein biogenesis, and function in nonvesicular lipid trafficking between the ER and mitochondria. Mdm34 is required for the interaction of the ER-resident membrane protein mmm1 and the outer mitochondrial membrane-resident beta-barrel protein mdm10. This Neosartorya fischeri (strain ATCC 1020 / DSM 3700 / CBS 544.65 / FGSC A1164 / JCM 1740 / NRRL 181 / WB 181) (Aspergillus fischerianus) protein is Mitochondrial distribution and morphology protein 34.